Here is a 134-residue protein sequence, read N- to C-terminus: Aspartate 1-decarboxylase (134 aa).

Residue S25 is the Schiff-base intermediate with substrate; via pyruvic acid of the active site. S25 is modified (pyruvic acid (Ser)). T57 provides a ligand contact to substrate. Y58 (proton donor) is an active-site residue. 73-75 contributes to the substrate binding site; that stretch reads GAA.

The protein belongs to the PanD family. Heterooctamer of four alpha and four beta subunits. Pyruvate is required as a cofactor. Post-translationally, is synthesized initially as an inactive proenzyme, which is activated by self-cleavage at a specific serine bond to produce a beta-subunit with a hydroxyl group at its C-terminus and an alpha-subunit with a pyruvoyl group at its N-terminus.

It is found in the cytoplasm. The catalysed reaction is L-aspartate + H(+) = beta-alanine + CO2. The protein operates within cofactor biosynthesis; (R)-pantothenate biosynthesis; beta-alanine from L-aspartate: step 1/1. Functionally, catalyzes the pyruvoyl-dependent decarboxylation of aspartate to produce beta-alanine. The protein is Aspartate 1-decarboxylase of Sulfurihydrogenibium sp. (strain YO3AOP1).